A 47-amino-acid chain; its full sequence is Defensin-like protein 1 (47 aa).

4 cysteine pairs are disulfide-bonded: Cys-5–Cys-47, Cys-16–Cys-36, Cys-22–Cys-43, and Cys-26–Cys-45.

It belongs to the DEFL family.

In terms of biological role, fabatins have antibacterial activity against Gram-positive and Gram-negative bacteria. High activity against P.aeruginosa. No activity against S.cerevisiae and C.albicans. The polypeptide is Defensin-like protein 1 (Vicia faba (Broad bean)).